A 469-amino-acid polypeptide reads, in one-letter code: Uronate isomerase (469 aa).

It belongs to the metallo-dependent hydrolases superfamily. Uronate isomerase family.

It catalyses the reaction D-glucuronate = D-fructuronate. The catalysed reaction is aldehydo-D-galacturonate = keto-D-tagaturonate. It participates in carbohydrate metabolism; pentose and glucuronate interconversion. The sequence is that of Uronate isomerase from Rhizobium meliloti (strain 1021) (Ensifer meliloti).